The chain runs to 539 residues: AT-rich interactive domain-containing protein 3A (539 aa).

The interval 1–190 (MKLQAVMETL…PLSGHPQLQD (190 aa)) is disordered. A compositionally biased stretch (low complexity) spans 55-73 (LKIQRAQAAALAAMRAAAA). Acidic residues predominate over residues 84 to 100 (SEEEDGESMASDEEDEK). Over residues 101-110 (ERDGESERYQ) the composition is skewed to basic and acidic residues. The span at 113-141 (ASEEEDLKGKWDEDDFEDEGEDEYEDMEE) shows a compositional bias: acidic residues. A compositionally biased stretch (polar residues) spans 161–173 (HSSQQAFPSQRSQ). The ARID domain occupies 209–301 (DPKRKEFLDD…YLYPYECEKR (93 aa)). Residues 404-499 (AALEQLREKL…GVLFAQPPTS (96 aa)) form the REKLES domain. Positions 405 to 448 (ALEQLREKLESGEPPEKKMALGSEEQQRIIQRTIQHNLLAMTAQ) are important for nuclear localization. A homodimerization region spans residues 450 to 471 (PMNIRINSQAEGRQDSAVNLTT). Positions 495 to 502 (QPPTSASG) are important for cytoplasmic localization. Polar residues predominate over residues 497-512 (PTSASGTSKGSSNRTG). The interval 497–539 (PTSASGTSKGSSNRTGSIGGGSSNSQAAPPSTPSAPNSNNPSP) is disordered. The segment covering 519-539 (SNSQAAPPSTPSAPNSNNPSP) has biased composition (low complexity).

As to quaternary structure, homodimer.

It is found in the nucleus. The protein resides in the cytoplasm. In terms of biological role, transcription factor required for smad1 and smad2-mediated responses to TGFbeta during mesoderm induction. The chain is AT-rich interactive domain-containing protein 3A (arid3a) from Xenopus laevis (African clawed frog).